Here is a 188-residue protein sequence, read N- to C-terminus: Small ribosomal subunit protein eS8 (188 aa).

Residues 1 to 34 form a disordered region; that stretch reads MGISRDSRHKRRLTGGRYPVHKKKRKYELGRPSS. Over residues 7-26 the composition is skewed to basic residues; sequence SRHKRRLTGGRYPVHKKKRK.

It belongs to the eukaryotic ribosomal protein eS8 family.

In Theileria parva (East coast fever infection agent), this protein is Small ribosomal subunit protein eS8 (RPS8).